Here is a 423-residue protein sequence, read N- to C-terminus: D-tagatose-1,6-bisphosphate aldolase subunit GatZ (423 aa).

It belongs to the GatZ/KbaZ family. GatZ subfamily. In terms of assembly, forms a complex with GatY.

Its pathway is carbohydrate metabolism; D-tagatose 6-phosphate degradation; D-glyceraldehyde 3-phosphate and glycerone phosphate from D-tagatose 6-phosphate: step 2/2. Component of the tagatose-1,6-bisphosphate aldolase GatYZ that is required for full activity and stability of the Y subunit. Could have a chaperone-like function for the proper and stable folding of GatY. When expressed alone, GatZ does not show any aldolase activity. Is involved in the catabolism of galactitol. This Salmonella typhimurium (strain LT2 / SGSC1412 / ATCC 700720) protein is D-tagatose-1,6-bisphosphate aldolase subunit GatZ.